The following is a 424-amino-acid chain: Methylthioribose-1-phosphate isomerase (424 aa).

The active-site Proton donor is the aspartate 281.

The protein belongs to the eIF-2B alpha/beta/delta subunits family. MtnA subfamily.

It is found in the cytoplasm. The protein resides in the nucleus. The enzyme catalyses 5-(methylsulfanyl)-alpha-D-ribose 1-phosphate = 5-(methylsulfanyl)-D-ribulose 1-phosphate. It functions in the pathway amino-acid biosynthesis; L-methionine biosynthesis via salvage pathway; L-methionine from S-methyl-5-thio-alpha-D-ribose 1-phosphate: step 1/6. Its function is as follows. Catalyzes the interconversion of methylthioribose-1-phosphate (MTR-1-P) into methylthioribulose-1-phosphate (MTRu-1-P). This chain is Methylthioribose-1-phosphate isomerase, found in Candida dubliniensis (strain CD36 / ATCC MYA-646 / CBS 7987 / NCPF 3949 / NRRL Y-17841) (Yeast).